Here is a 337-residue protein sequence, read N- to C-terminus: MADRYILAVESSCDETSVAVLKNEKDLLSNIIASQVESHKRFGGVVPEVASRHHVEVVTLCIKDALSEAGIVAEQLDAVAVTYGPGLVGALLVGMAAAKAFAWAHGLPLIPVNHMAGHLMAAREVQELEYPLLALLVSGGHTELVYVSEPGNYKIVGETRDDAVGEAYDKVGRVMGLTYPAGREIDELAHKGKDVYDFPRAMIKEDHLEFSFSGLKSAFINLHHNAEQKGEVLVTEDLCASFQAAVLDILLAKTKKALERYPVKTLVVAGGVAANQGLRERLAEEITDVDVVIPPLRLCGDNAGMIALAAAIECDKKHFADLDLNAKPSLAFAGFEE.

Residues H114 and H118 each contribute to the Fe cation site. Substrate is bound by residues 136–140, D169, G182, D186, and N275; that span reads LVSGG. D301 lines the Fe cation pocket.

This sequence belongs to the KAE1 / TsaD family. The cofactor is Fe(2+).

The protein localises to the cytoplasm. The enzyme catalyses L-threonylcarbamoyladenylate + adenosine(37) in tRNA = N(6)-L-threonylcarbamoyladenosine(37) in tRNA + AMP + H(+). Required for the formation of a threonylcarbamoyl group on adenosine at position 37 (t(6)A37) in tRNAs that read codons beginning with adenine. Is involved in the transfer of the threonylcarbamoyl moiety of threonylcarbamoyl-AMP (TC-AMP) to the N6 group of A37, together with TsaE and TsaB. TsaD likely plays a direct catalytic role in this reaction. This chain is tRNA N6-adenosine threonylcarbamoyltransferase, found in Streptococcus thermophilus (strain ATCC BAA-491 / LMD-9).